A 464-amino-acid polypeptide reads, in one-letter code: A-type ATP synthase subunit B (464 aa).

This sequence belongs to the ATPase alpha/beta chains family. Has multiple subunits with at least A(3), B(3), C, D, E, F, H, I and proteolipid K(x).

It is found in the cell membrane. Functionally, component of the A-type ATP synthase that produces ATP from ADP in the presence of a proton gradient across the membrane. The B chain is a regulatory subunit. This chain is A-type ATP synthase subunit B, found in Methanococcus aeolicus (strain ATCC BAA-1280 / DSM 17508 / OCM 812 / Nankai-3).